The following is a 471-amino-acid chain: Ribulose bisphosphate carboxylase large chain (471 aa).

An N6,N6,N6-trimethyllysine modification is found at K5. Residues N114 and T164 each contribute to the substrate site. Residue K166 is the Proton acceptor of the active site. K168 contacts substrate. 3 residues coordinate Mg(2+): K192, D194, and E195. K192 is subject to N6-carboxylysine. H285 functions as the Proton acceptor in the catalytic mechanism. Residues R286, H318, and S370 each contribute to the substrate site.

It belongs to the RuBisCO large chain family. Type I subfamily. Heterohexadecamer of 8 large chains and 8 small chains; disulfide-linked. The disulfide link is formed within the large subunit homodimers. The cofactor is Mg(2+). In terms of processing, the disulfide bond which can form in the large chain dimeric partners within the hexadecamer appears to be associated with oxidative stress and protein turnover.

The protein resides in the plastid. Its subcellular location is the chloroplast. The enzyme catalyses 2 (2R)-3-phosphoglycerate + 2 H(+) = D-ribulose 1,5-bisphosphate + CO2 + H2O. The catalysed reaction is D-ribulose 1,5-bisphosphate + O2 = 2-phosphoglycolate + (2R)-3-phosphoglycerate + 2 H(+). RuBisCO catalyzes two reactions: the carboxylation of D-ribulose 1,5-bisphosphate, the primary event in carbon dioxide fixation, as well as the oxidative fragmentation of the pentose substrate in the photorespiration process. Both reactions occur simultaneously and in competition at the same active site. In Chiococca alba (West Indian milkberry), this protein is Ribulose bisphosphate carboxylase large chain.